The primary structure comprises 348 residues: Calcium-gated potassium channel TvoK (348 aa).

3 helical membrane passes run leucine 19 to leucine 39, tyrosine 52 to valine 72, and valine 80 to isoleucine 100. The 127-residue stretch at lysine 120–serine 246 folds into the RCK N-terminal domain. The 83-residue stretch at aspartate 266–glycine 348 folds into the RCK C-terminal domain.

As to quaternary structure, heterooctamer composed of four full-length subunits and four soluble RCK domains.

It localises to the cell membrane. Its function is as follows. Calcium-gated potassium channel. Can also be activated by Mg(2+), Mn(2+) and Ni(2+). This Thermoplasma volcanium (strain ATCC 51530 / DSM 4299 / JCM 9571 / NBRC 15438 / GSS1) protein is Calcium-gated potassium channel TvoK.